Reading from the N-terminus, the 427-residue chain is Peptidase B (427 aa).

Mn(2+)-binding residues include Lys195 and Asp200. Lys207 is an active-site residue. 3 residues coordinate Mn(2+): Asp218, Asp277, and Glu279. The active site involves Arg281.

The protein belongs to the peptidase M17 family. As to quaternary structure, homohexamer. The cofactor is Mn(2+).

The protein resides in the cytoplasm. It carries out the reaction Release of an N-terminal amino acid, Xaa, from a peptide or arylamide. Xaa is preferably Glu or Asp but may be other amino acids, including Leu, Met, His, Cys and Gln.. Functionally, probably plays an important role in intracellular peptide degradation. This Salmonella dublin (strain CT_02021853) protein is Peptidase B.